The following is a 977-amino-acid chain: Leucine--tRNA ligase (977 aa).

Positions 11 to 21 match the 'HIGH' region motif; that stretch reads PYVNGYLHLGH. The tract at residues 220–318 is insert; the sequence is VFYVYELYSL…EYYNTKVETQ (99 aa). The 'KMSKS' region signature appears at 699–703; sequence KMSKS. ATP is bound at residue Lys702.

The protein belongs to the class-I aminoacyl-tRNA synthetase family.

The protein localises to the cytoplasm. The enzyme catalyses tRNA(Leu) + L-leucine + ATP = L-leucyl-tRNA(Leu) + AMP + diphosphate. In Nanoarchaeum equitans (strain Kin4-M), this protein is Leucine--tRNA ligase (leuS).